Reading from the N-terminus, the 1193-residue chain is DNA polymerase (1193 aa).

Residues 1 to 88 (MALVQTHGSR…PAKKKRGTVV (88 aa)) form a disordered region. Residues 48–68 (PATTASGSRAAPTARRASSPP) show a composition bias toward low complexity.

The protein belongs to the DNA polymerase type-B family. As to quaternary structure, heterodimer with the terminal protein; this heterodimer binds to bp 9 to 18 of the genome. Forms a complex with viral pTP, DBP and hosts NFIA and POU2F1/OCT1 for initiation of replication.

It is found in the host nucleus. It carries out the reaction DNA(n) + a 2'-deoxyribonucleoside 5'-triphosphate = DNA(n+1) + diphosphate. In terms of biological role, eukaryotic-type DNA polymerase involved in viral genomic replication. DNA synthesis is protein primed, and acts in a strand displacement replication. Assembles in complex with viral pTP, DBP, host NFIA and host POU2F1/OCT1 on viral origin of replication. The polymerase covalently transfers dCMP onto pTP, thereby initiating complementary strand synthesis. This Homo sapiens (Human) protein is DNA polymerase.